The sequence spans 94 residues: Small ribosomal subunit protein uS19 (94 aa).

Residues E73–R94 are disordered. Residues H83–R94 are compositionally biased toward basic and acidic residues.

Belongs to the universal ribosomal protein uS19 family.

Functionally, protein S19 forms a complex with S13 that binds strongly to the 16S ribosomal RNA. In Thermomicrobium roseum (strain ATCC 27502 / DSM 5159 / P-2), this protein is Small ribosomal subunit protein uS19.